A 189-amino-acid polypeptide reads, in one-letter code: Holliday junction branch migration complex subunit RuvA (189 aa).

The interval 1 to 63 (MIYAMYGVLE…DDEISLYGFS (63 aa)) is domain I. The tract at residues 64–135 (DVLKLKLFEK…ELKDSMKEFD (72 aa)) is domain II. The interval 135 to 139 (DVTLT) is flexible linker. Positions 140–189 (EKDKKILEAIEALVTLGFSRNQSKKAVTQILKKDDSLDDIIKKALKFLSR) are domain III.

This sequence belongs to the RuvA family. As to quaternary structure, homotetramer. Forms an RuvA(8)-RuvB(12)-Holliday junction (HJ) complex. HJ DNA is sandwiched between 2 RuvA tetramers; dsDNA enters through RuvA and exits via RuvB. An RuvB hexamer assembles on each DNA strand where it exits the tetramer. Each RuvB hexamer is contacted by two RuvA subunits (via domain III) on 2 adjacent RuvB subunits; this complex drives branch migration. In the full resolvosome a probable DNA-RuvA(4)-RuvB(12)-RuvC(2) complex forms which resolves the HJ.

Its subcellular location is the cytoplasm. Its function is as follows. The RuvA-RuvB-RuvC complex processes Holliday junction (HJ) DNA during genetic recombination and DNA repair, while the RuvA-RuvB complex plays an important role in the rescue of blocked DNA replication forks via replication fork reversal (RFR). RuvA specifically binds to HJ cruciform DNA, conferring on it an open structure. The RuvB hexamer acts as an ATP-dependent pump, pulling dsDNA into and through the RuvAB complex. HJ branch migration allows RuvC to scan DNA until it finds its consensus sequence, where it cleaves and resolves the cruciform DNA. The protein is Holliday junction branch migration complex subunit RuvA of Thermosipho melanesiensis (strain DSM 12029 / CIP 104789 / BI429).